We begin with the raw amino-acid sequence, 302 residues long: Pantothenate synthetase (302 aa).

Position 30–37 (30–37 (MGALHGGH)) interacts with ATP. The active-site Proton donor is the His-37. Gln-61 contacts (R)-pantoate. Gln-61 is a binding site for beta-alanine. Position 147 to 150 (147 to 150 (GEKD)) interacts with ATP. Gln-153 provides a ligand contact to (R)-pantoate. Residues Val-176 and 184–187 (KSSR) each bind ATP.

Belongs to the pantothenate synthetase family. As to quaternary structure, homodimer.

It is found in the cytoplasm. It carries out the reaction (R)-pantoate + beta-alanine + ATP = (R)-pantothenate + AMP + diphosphate + H(+). It functions in the pathway cofactor biosynthesis; (R)-pantothenate biosynthesis; (R)-pantothenate from (R)-pantoate and beta-alanine: step 1/1. Its function is as follows. Catalyzes the condensation of pantoate with beta-alanine in an ATP-dependent reaction via a pantoyl-adenylate intermediate. The chain is Pantothenate synthetase from Shouchella clausii (strain KSM-K16) (Alkalihalobacillus clausii).